Consider the following 250-residue polypeptide: MYLRSRAIVIKNMDYRESDKLVTIFCEHEGKMKAVARGIKKPRSSLRACVQPFCHSSLFFSRGKGMNLITQGKLLDFYGNTREDFERSLYALYLMELLDKSLMEGVAIPRLYTSTLEVLSHLNHSGYNPMLIRYFEMNLLVNLGYSPLLDHCVLCGKKDDLKVFSLPDGGMLCRDCSYQASGAVSLSKETLALISLLGRSRLATVERVRVSNKAQKELEYFLEKYLEYYLERKFNLKKAMSILKRSMPRY.

It belongs to the RecO family.

In terms of biological role, involved in DNA repair and RecF pathway recombination. This is DNA repair protein RecO from Syntrophomonas wolfei subsp. wolfei (strain DSM 2245B / Goettingen).